Reading from the N-terminus, the 512-residue chain is GMP synthase [glutamine-hydrolyzing] (512 aa).

One can recognise a Glutamine amidotransferase type-1 domain in the interval 7–197; the sequence is TIIVLDFGSQ…VFGVCGCSEG (191 aa). The active-site Nucleophile is Cys84. Catalysis depends on residues His171 and Glu173. The GMPS ATP-PPase domain occupies 198 to 387; it reads WNMENFIEVE…LGIPDEIVWR (190 aa). 225–231 is an ATP binding site; the sequence is SGGVDSS.

In terms of assembly, homodimer.

The enzyme catalyses XMP + L-glutamine + ATP + H2O = GMP + L-glutamate + AMP + diphosphate + 2 H(+). The protein operates within purine metabolism; GMP biosynthesis; GMP from XMP (L-Gln route): step 1/1. In terms of biological role, catalyzes the synthesis of GMP from XMP. This is GMP synthase [glutamine-hydrolyzing] from Bacillus mycoides (strain KBAB4) (Bacillus weihenstephanensis).